A 257-amino-acid polypeptide reads, in one-letter code: ATP synthase delta chain, chloroplastic (257 aa).

Residues 1 to 70 (MAALQNPVAL…PRGGALGTRM (70 aa)) constitute a chloroplast transit peptide.

Belongs to the ATPase delta chain family. F-type ATPases have 2 components, CF(1) - the catalytic core - and CF(0) - the membrane proton channel. CF(1) has five subunits: alpha(3), beta(3), gamma(1), delta(1), epsilon(1). CF(0) has three main subunits: a, b and c.

Its subcellular location is the plastid. The protein resides in the chloroplast thylakoid membrane. This protein seems to be part of the stalk that links CF(0) to CF(1). It either transmits conformational changes from CF(0) into CF(1) or is implicated in proton conduction. This is ATP synthase delta chain, chloroplastic (ATPD) from Spinacia oleracea (Spinach).